Consider the following 408-residue polypeptide: Putative agmatinase 3 (408 aa).

The signal sequence occupies residues 1–21 (MKSVEWFTWGVFLLLSGFGEA). Mn(2+) contacts are provided by His198, Asp222, His224, Asp226, Asp319, and Asp321.

Belongs to the arginase family. It depends on Mn(2+) as a cofactor.

The catalysed reaction is agmatine + H2O = urea + putrescine. In Schizosaccharomyces pombe (strain 972 / ATCC 24843) (Fission yeast), this protein is Putative agmatinase 3.